Consider the following 286-residue polypeptide: Acetylglutamate kinase (286 aa).

Substrate contacts are provided by residues 69–70 (GG), Arg91, and Asn185.

The protein belongs to the acetylglutamate kinase family. ArgB subfamily.

It localises to the cytoplasm. It catalyses the reaction N-acetyl-L-glutamate + ATP = N-acetyl-L-glutamyl 5-phosphate + ADP. It functions in the pathway amino-acid biosynthesis; L-arginine biosynthesis; N(2)-acetyl-L-ornithine from L-glutamate: step 2/4. Catalyzes the ATP-dependent phosphorylation of N-acetyl-L-glutamate. The polypeptide is Acetylglutamate kinase (Chlorobium chlorochromatii (strain CaD3)).